The sequence spans 201 residues: Recombination protein RecR (201 aa).

The C4-type zinc finger occupies 58–73; the sequence is CPECGLLTEEERCGLC. Residues 81-176 form the Toprim domain; it reads TLLCVVESSA…RTTRIAHGVP (96 aa).

The protein belongs to the RecR family.

Functionally, may play a role in DNA repair. It seems to be involved in an RecBC-independent recombinational process of DNA repair. It may act with RecF and RecO. This chain is Recombination protein RecR, found in Halorhodospira halophila (strain DSM 244 / SL1) (Ectothiorhodospira halophila (strain DSM 244 / SL1)).